The chain runs to 430 residues: Aspartate aminotransferase, mitochondrial (430 aa).

The N-terminal 29 residues, 1–29, are a transit peptide targeting the mitochondrion; that stretch reads MALLHSARVLSGVASAFHPGLAAAASARA. Position 48 is a phosphothreonine (threonine 48). Residue lysine 59 is modified to N6-acetyllysine. Residue glycine 65 participates in substrate binding. The residue at position 73 (lysine 73) is an N6-acetyllysine; alternate. An N6-succinyllysine; alternate modification is found at lysine 73. Residue lysine 82 is modified to N6-acetyllysine. Position 90 is an N6-acetyllysine; alternate (lysine 90). The residue at position 90 (lysine 90) is an N6-succinyllysine; alternate. A 3'-nitrotyrosine; alternate modification is found at tyrosine 96. Tyrosine 96 carries the phosphotyrosine; alternate modification. Lysine 122 is modified (N6-acetyllysine; alternate). Lysine 122 is modified (N6-succinyllysine; alternate). Phosphoserine is present on serine 143. Lysine 159 carries the N6-acetyllysine; alternate modification. Lysine 159 carries the N6-succinyllysine; alternate modification. Tryptophan 162 is a substrate binding site. Lysine 185 carries the N6-acetyllysine; alternate modification. Position 185 is an N6-succinyllysine; alternate (lysine 185). Residue asparagine 215 participates in substrate binding. Lysine 227 carries the N6-succinyllysine modification. Lysine 234 bears the N6-acetyllysine mark. N6-acetyllysine; alternate is present on residues lysine 279 and lysine 296. At lysine 279 the chain carries N6-(pyridoxal phosphate)lysine; alternate. Lysine 296 carries the post-translational modification N6-succinyllysine; alternate. Lysine 302 carries the post-translational modification N6-acetyllysine. Lysine 309 carries the post-translational modification N6-acetyllysine; alternate. Lysine 309 carries the post-translational modification N6-succinyllysine; alternate. Arginine 313 bears the Asymmetric dimethylarginine mark. Lysine 338 carries the post-translational modification N6-acetyllysine; alternate. N6-succinyllysine; alternate is present on lysine 338. An N6-acetyllysine modification is found at lysine 345. Residue lysine 363 is modified to N6-acetyllysine; alternate. An N6-succinyllysine; alternate modification is found at lysine 363. N6-acetyllysine occurs at positions 364 and 387. N6-acetyllysine; alternate is present on residues lysine 396 and lysine 404. An N6-succinyllysine; alternate mark is found at lysine 396 and lysine 404. Arginine 407 is a binding site for substrate.

This sequence belongs to the class-I pyridoxal-phosphate-dependent aminotransferase family. Homodimer. Pyridoxal 5'-phosphate serves as cofactor.

The protein localises to the mitochondrion matrix. Its subcellular location is the cell membrane. The enzyme catalyses L-aspartate + 2-oxoglutarate = oxaloacetate + L-glutamate. It catalyses the reaction L-kynurenine + 2-oxoglutarate = kynurenate + L-glutamate + H2O. In terms of biological role, catalyzes the irreversible transamination of the L-tryptophan metabolite L-kynurenine to form kynurenic acid (KA). As a member of the malate-aspartate shuttle, it has a key role in the intracellular NAD(H) redox balance. Is important for metabolite exchange between mitochondria and cytosol, and for amino acid metabolism. Facilitates cellular uptake of long-chain free fatty acids. The chain is Aspartate aminotransferase, mitochondrial (GOT2) from Oryctolagus cuniculus (Rabbit).